Reading from the N-terminus, the 253-residue chain is MKTLQAKLSNKKNNFVPYIMAGDHERGLEGLNETIQLLEQAGSSAIEIGVPFSDPVADGPVIEQAGLRALAKNVSLSKILDSLKSIETEVPLVIMTYFNPVYQFGIENFVAALENTAVKGLIIPDLPKEHEAYIKPFITDKDICLVPLVSLTTPISRQKELVVDAEGFIYAVAINGVTGKENAYSNQLDHHLETLSKLTDIPVLTGFGISTLTDVERFNKVSAGVIVGSKIVRDLHENKESDVIKFIKNAINF.

Residues Glu-47 and Asp-58 each act as proton acceptor in the active site.

It belongs to the TrpA family. Tetramer of two alpha and two beta chains.

The catalysed reaction is (1S,2R)-1-C-(indol-3-yl)glycerol 3-phosphate + L-serine = D-glyceraldehyde 3-phosphate + L-tryptophan + H2O. It participates in amino-acid biosynthesis; L-tryptophan biosynthesis; L-tryptophan from chorismate: step 5/5. The alpha subunit is responsible for the aldol cleavage of indoleglycerol phosphate to indole and glyceraldehyde 3-phosphate. The sequence is that of Tryptophan synthase alpha chain from Lactococcus lactis subsp. cremoris (strain SK11).